Here is a 383-residue protein sequence, read N- to C-terminus: Dual-specificity RNA methyltransferase RlmN (383 aa).

Glutamate 94 functions as the Proton acceptor in the catalytic mechanism. One can recognise a Radical SAM core domain in the interval 100–339 (DGDRATLCVS…VTVRRTRGDD (240 aa)). Residues cysteine 107 and cysteine 344 are joined by a disulfide bond. [4Fe-4S] cluster contacts are provided by cysteine 114, cysteine 118, and cysteine 121. S-adenosyl-L-methionine-binding positions include 168-169 (GE), serine 200, 222-224 (SLH), and asparagine 301. Cysteine 344 acts as the S-methylcysteine intermediate in catalysis.

It belongs to the radical SAM superfamily. RlmN family. [4Fe-4S] cluster is required as a cofactor.

The protein localises to the cytoplasm. It catalyses the reaction adenosine(2503) in 23S rRNA + 2 reduced [2Fe-2S]-[ferredoxin] + 2 S-adenosyl-L-methionine = 2-methyladenosine(2503) in 23S rRNA + 5'-deoxyadenosine + L-methionine + 2 oxidized [2Fe-2S]-[ferredoxin] + S-adenosyl-L-homocysteine. The catalysed reaction is adenosine(37) in tRNA + 2 reduced [2Fe-2S]-[ferredoxin] + 2 S-adenosyl-L-methionine = 2-methyladenosine(37) in tRNA + 5'-deoxyadenosine + L-methionine + 2 oxidized [2Fe-2S]-[ferredoxin] + S-adenosyl-L-homocysteine. Its function is as follows. Specifically methylates position 2 of adenine 2503 in 23S rRNA and position 2 of adenine 37 in tRNAs. m2A2503 modification seems to play a crucial role in the proofreading step occurring at the peptidyl transferase center and thus would serve to optimize ribosomal fidelity. In Aliivibrio salmonicida (strain LFI1238) (Vibrio salmonicida (strain LFI1238)), this protein is Dual-specificity RNA methyltransferase RlmN.